Here is a 362-residue protein sequence, read N- to C-terminus: MPLPTYDPADYPTQLATKVAHFEQNFAPFGVANTAIHASAPLHYRMRAEFRIWHEGDDLNYAMFDPADPKQPITLETFPPAAESICHLMPRLRDKLRGNESLRRRLFQADFLATLSGEMLVTLIYHRQLDEAWEAAAREMAAELGIGLIGRSRGQKIVLDRDWVLEGFELNGRQLRYKQVEGSFTQPNGGVNRQMLGWACQQAAGFGGNLVELYCGNGNFTIALSPLFERVLATEVSKSSVHAAQYNLAANQVENVALVRMSSEEFSNALAGREEFQRLKDIDLEPFRHATLFVDPPRSGLDAVTLELARGFDRILYISCNQETLRENVIALQDTHEIKASAVFDQFPYTHHLECGLLLTRR.

The S-adenosyl-L-methionine site is built by glutamine 186, tyrosine 214, asparagine 219, glutamate 235, and aspartate 295. The active-site Nucleophile is cysteine 320. Glutamate 354 acts as the Proton acceptor in catalysis.

It belongs to the class I-like SAM-binding methyltransferase superfamily. RNA M5U methyltransferase family. TrmA subfamily.

It carries out the reaction uridine(54) in tRNA + S-adenosyl-L-methionine = 5-methyluridine(54) in tRNA + S-adenosyl-L-homocysteine + H(+). The catalysed reaction is uridine(341) in tmRNA + S-adenosyl-L-methionine = 5-methyluridine(341) in tmRNA + S-adenosyl-L-homocysteine + H(+). Functionally, dual-specificity methyltransferase that catalyzes the formation of 5-methyluridine at position 54 (m5U54) in all tRNAs, and that of position 341 (m5U341) in tmRNA (transfer-mRNA). The polypeptide is tRNA/tmRNA (uracil-C(5))-methyltransferase (Dechloromonas aromatica (strain RCB)).